The primary structure comprises 254 residues: Phosphoribosylaminoimidazole-succinocarboxamide synthase (254 aa).

This sequence belongs to the SAICAR synthetase family.

The enzyme catalyses 5-amino-1-(5-phospho-D-ribosyl)imidazole-4-carboxylate + L-aspartate + ATP = (2S)-2-[5-amino-1-(5-phospho-beta-D-ribosyl)imidazole-4-carboxamido]succinate + ADP + phosphate + 2 H(+). It participates in purine metabolism; IMP biosynthesis via de novo pathway; 5-amino-1-(5-phospho-D-ribosyl)imidazole-4-carboxamide from 5-amino-1-(5-phospho-D-ribosyl)imidazole-4-carboxylate: step 1/2. The chain is Phosphoribosylaminoimidazole-succinocarboxamide synthase from Bartonella tribocorum (strain CIP 105476 / IBS 506).